A 483-amino-acid polypeptide reads, in one-letter code: Beta-glucosidase 4 (483 aa).

Residues Q29, H131, 176-177 (NE), Y310, and E380 contribute to the a beta-D-glucoside site. Catalysis depends on E177, which acts as the Proton donor. The Nucleophile role is filled by E380. Residue N398 is glycosylated (N-linked (GlcNAc...) asparagine). A beta-D-glucoside-binding positions include W429, 436 to 437 (EW), and F445.

It belongs to the glycosyl hydrolase 1 family.

It catalyses the reaction Hydrolysis of terminal, non-reducing beta-D-glucosyl residues with release of beta-D-glucose.. The polypeptide is Beta-glucosidase 4 (BGLU4) (Oryza sativa subsp. japonica (Rice)).